A 545-amino-acid polypeptide reads, in one-letter code: Ubiquitin carboxyl-terminal hydrolase 17-like protein C (545 aa).

The USP domain maps to 51 to 348; the sequence is CGLQNTGNSC…NAYVLFYVQQ (298 aa). The active-site Nucleophile is cysteine 60. Histidine 307 functions as the Proton acceptor in the catalytic mechanism. Disordered stretches follow at residues 368 to 442 and 489 to 539; these read DPEY…QKLG and WGRD…KQGQ. Residues 374-385 show a composition bias toward basic residues; the sequence is KKSRRKKHKKKS. Composition is skewed to basic and acidic residues over residues 393–404 and 489–505; these read EPCKNREKRATK and WGRDAPDKENQPWHNAD. A compositionally biased stretch (polar residues) spans 508–519; it reads LTSQDPVNTGQL. Basic residues predominate over residues 524-537; the sequence is GRRRSKKGKNKNKQ.

This sequence belongs to the peptidase C19 family. USP17 subfamily. As to expression, expressed in T cells.

It localises to the nucleus. The protein resides in the endoplasmic reticulum. It carries out the reaction Thiol-dependent hydrolysis of ester, thioester, amide, peptide and isopeptide bonds formed by the C-terminal Gly of ubiquitin (a 76-residue protein attached to proteins as an intracellular targeting signal).. In terms of biological role, deubiquitinating enzyme that removes conjugated ubiquitin from specific proteins to regulate different cellular processes. Important for preimplantation stage embryonic development. The polypeptide is Ubiquitin carboxyl-terminal hydrolase 17-like protein C (Mus musculus (Mouse)).